Here is a 2245-residue protein sequence, read N- to C-terminus: Basic helix-loop-helix domain-containing protein USF3 (2245 aa).

The tract at residues 1 to 28 (MPEMTENETPTKKQHRKKNRETHNAVER) is disordered. The 52-residue stretch at 18–69 (KNRETHNAVERHRKKKINAGINRIGELIPCSPALKQSKNMILDQAFKYITEL) folds into the bHLH domain. Residues 77–112 (LLNGGNNEQAEEIKKLRKQLEEIQKENGRYIELLKA) adopt a coiled-coil conformation. Disordered regions lie at residues 271–290 (LHTC…QENP), 447–470 (SQTP…TSNH), 881–900 (SKSK…VTSE), 906–933 (AAKS…ALSD), 1015–1041 (KNPQ…IVDS), 1164–1238 (PSEA…SITS), 1307–1331 (IPNS…AKRA), 1460–1624 (IKQQ…VSGH), 1636–1664 (LEQQ…ERNR), 1736–1764 (TFKP…GNPV), 1777–1815 (ISQN…ENTC), 1834–1859 (GSQR…YNCP), and 1891–2031 (STLN…QPAT). Over residues 273–288 (TCLNDQNSSENKNGQE) the composition is skewed to polar residues. The segment covering 881–896 (SKSKSAEKSSPPSQES) has biased composition (low complexity). Polar residues predominate over residues 912-925 (STPNLQQETSQDKP). Composition is skewed to polar residues over residues 1185–1202 (GTGQ…QGSI) and 1219–1238 (IKTS…SITS). A compositionally biased stretch (basic and acidic residues) spans 1319-1331 (PSHESRKDSAKRA). Over residues 1462-1478 (QQQQQQQQQQQQQQQQQ) the composition is skewed to low complexity. 2 stretches are compositionally biased toward polar residues: residues 1501–1520 (SVHS…QEVQ) and 1528–1538 (VQGTQTSQLSL). Over residues 1560–1569 (QQMQQQMQQH) the composition is skewed to low complexity. Positions 1570-1585 (FGSSQTEKSCENPSTS) are enriched in polar residues. Low complexity predominate over residues 1593 to 1624 (QNHLNQDIMHQQQDVGSRQQGSGVSSEHVSGH). Over residues 1636–1654 (LEQQMVSQPSIVTRSSDMT) the composition is skewed to polar residues. 2 stretches are compositionally biased toward polar residues: residues 1904-1923 (GDIQ…SNPM) and 1998-2007 (SGNQRQSTVF).

It is found in the nucleus. Its function is as follows. Involved in the negative regulation of epithelial-mesenchymal transition, the process by which epithelial cells lose their polarity and adhesion properties to become mesenchymal cells with enhanced migration and invasive properties. In Homo sapiens (Human), this protein is Basic helix-loop-helix domain-containing protein USF3.